The sequence spans 189 residues: Resolvase (189 aa).

In terms of domain architecture, Resolvase/invertase-type recombinase catalytic spans 1-139 (MLVGYARVST…EGLKSAKARG (139 aa)). Serine 9 acts as the O-(5'-phospho-DNA)-serine intermediate in catalysis. Residues 130 to 151 (EGLKSAKARGRNGGRPSKRNDK) are disordered. The segment at residues 165–184 (IVDIVKQTGLSRATVYRVLN) is a DNA-binding region (H-T-H motif).

Belongs to the site-specific recombinase resolvase family.

Its function is as follows. A likely role for the res protein would be to stabilize pIP404 by reducing the number of plasmid multimers resulting from homologous recombination. In Clostridium perfringens, this protein is Resolvase (res).